Here is a 130-residue protein sequence, read N- to C-terminus: Small ribosomal subunit protein uS8 (130 aa).

The protein belongs to the universal ribosomal protein uS8 family. In terms of assembly, part of the 30S ribosomal subunit. Contacts proteins S5 and S12.

Its function is as follows. One of the primary rRNA binding proteins, it binds directly to 16S rRNA central domain where it helps coordinate assembly of the platform of the 30S subunit. The chain is Small ribosomal subunit protein uS8 from Psychromonas ingrahamii (strain DSM 17664 / CCUG 51855 / 37).